A 441-amino-acid chain; its full sequence is Transcription factor TOXE (441 aa).

Positions 14-40 are basic DNA-binding region; it reads TDINERRKLQNRVAQRKYRTRQKTRMK. The segment at 209–243 is disordered; it reads FEPNDQRKTENLPREPCGSCPSSSHGYSPTSGNPS. Positions 212–221 are enriched in basic and acidic residues; sequence NDQRKTENLP. The span at 228–241 shows a compositional bias: polar residues; that stretch reads CPSSSHGYSPTSGN. ANK repeat units lie at residues 289-318, 322-351, 355-384, and 413-440; these read DQFS…PLDI, SGKT…EMLA, EGNS…SCRE, and EGMT…SANV.

The protein belongs to the bZIP family. In terms of assembly, monomer.

It localises to the nucleus. Functionally, transcription factor, part of the diffuse TOX2 gene cluster that mediates the biosynthesis of the HC-toxin, cyclic tetrapeptide of structure cyclo(D-Pro-L-Ala-D-Ala-L-Aeo), where Aeo stands for 2-amino-9,10-epoxi-8-oxodecanoic acid. HC-toxin is a determinant of specificity and virulence in the interaction between the producing fungus and its host, maize. TOXE is a pathway-specific transcription factor which coordinates the expression of genes involved in HC-toxin biosynthesis. Binds to the tox-box, a 10-bp motif with the consensus 5'-ATCTCNCGNA-3', which is found in the promoter of all genes involved in HC-toxin biosynthesis. Required for pathogenicity of the fungus on maize. The polypeptide is Transcription factor TOXE (Cochliobolus carbonum (Maize leaf spot fungus)).